Consider the following 409-residue polypeptide: Protein naked cuticle homolog 2 (409 aa).

Glycine 2 carries the N-myristoyl glycine lipid modification. Residues 109 to 144 (AEDNRQEWVFTLYDFDNSGKVTKEDMSSLMHTIYDV) enclose the EF-hand domain. Aspartate 122, aspartate 124, serine 126, lysine 128, and aspartate 133 together coordinate Ca(2+). Disordered stretches follow at residues 160-224 (LRVK…YCVD), 243-315 (TSRF…RYPG), 346-366 (SHTH…RIRS), and 388-409 (RHEH…YHQT). Basic and acidic residues-rich tracts occupy residues 171-185 (AARR…RETS) and 193-224 (VRSE…YCVD). The span at 247 to 268 (DSSSPDADQDPPSRSSHSQSRP) shows a compositional bias: low complexity. Over residues 389 to 409 (HEHHHHHEHHHHHHYHHYHQT) the composition is skewed to basic residues.

The protein belongs to the NKD family. In terms of tissue distribution, expressed ubiquitously until 1 dpf, when expression becomes confined to the anterior CNS, with slight expression in the developing tail.

Its subcellular location is the cell membrane. The protein localises to the cytoplasm. In terms of biological role, cell autonomous antagonist of both the canonical and non-canonical Wnt signaling pathways. In Danio rerio (Zebrafish), this protein is Protein naked cuticle homolog 2 (nkd2).